We begin with the raw amino-acid sequence, 216 residues long: Probable GTP-binding protein EngB (216 aa).

In terms of domain architecture, EngB-type G spans 24–205 (QTPELAFVGR…WARIASAATD (182 aa)). GTP contacts are provided by residues 32-39 (GRSNVGKS), 59-63 (GRTRA), 86-89 (DLPG), 153-156 (TKMD), and 184-186 (FSA). Mg(2+) contacts are provided by Ser-39 and Thr-61.

The protein belongs to the TRAFAC class TrmE-Era-EngA-EngB-Septin-like GTPase superfamily. EngB GTPase family. Requires Mg(2+) as cofactor.

Its function is as follows. Necessary for normal cell division and for the maintenance of normal septation. This chain is Probable GTP-binding protein EngB, found in Anaeromyxobacter sp. (strain Fw109-5).